An 82-amino-acid chain; its full sequence is Defensin-like protein 75 (82 aa).

Positions 1-26 (MAKIKSLDVITVAIILLLVIADQATA) are cleaved as a signal peptide. Disulfide bonds link cysteine 33–cysteine 66, cysteine 37–cysteine 55, cysteine 41–cysteine 64, and cysteine 45–cysteine 65.

This sequence belongs to the DEFL family.

The protein localises to the secreted. The polypeptide is Defensin-like protein 75 (LCR45) (Arabidopsis thaliana (Mouse-ear cress)).